Consider the following 3127-residue polypeptide: MKENSYNTSIHSNKVKNYDDADSSGDVAVVGIGLRFPSGNLKESISKPNQLFNELLNGLDGIVSTSERWSDNYCLNGEIVSKFAGLLPLDEWKQFDPIFFAINPSNDNVGSIDPQQRLLLKCVWEALEDSGIDPISLRGTNTSTFIGSSTIDYNNLQKSPFETQNNIFGSTTNSVANRIGYCFDFRGENLTIDTACSSSSNAINCGYNSIKSNKSNVSIVGGVNFILDPHISKSFTQLDMLSPTGKCHTFSSDADGYVRSEGVGIVVLKRLKDAIKDSNNIYCVIKGSSSNIDGNFDKLNFYSPSKSSQCENIKLAIKSTNGQINESDIDYCETHGTGTPTGDPIELEGISRVFNNKASTTKTNNNKQVLVGSVKSNIGHTEACSGVASLIKCCIMFKNKLFLQNINFKEPNPLINFKEWGLKVVTEPIKFNENKSTVMLINNFGITGSNVCLILSEFCSDQFRKSNDYHKMEIDNKFNEKKKYLIPLSSNSSTSLNNYKSSIIKHSNLTPFSSPTSFEGFICNQIKFKSTSLIQKSVIIASDWNEFQDESNHIKLENSDNLISNITVEKKKSPLTVMVLCGQGSQYNKMALSLYDNVPIFRESVNRFDKELFKYYGYSVLDKLRSIDDKDLISIHQPILAQPANVIIQVSLYELYKHWGVSADIIIGHSLGEISSAYCSGMIDFQTLCYLTYHRSVAQNRTIGTGRMLSVNISSDEFINKYQSTTKYKSLEIACYNSPTSIVIAGKEDLLNEITNEFKSNDIFCSMLGLLSSFHTSSQQMIKDEVCSLNISSKQPSIAVFSTVTTNLFNHQTSPFNADYAFNNIRQPVRFTQTITNLYKHIESNDMGNEITFIEVSPHPTLQYYLNQMKSTQSSYFNNGKNITIYSPLNKKKNDYNEFLKTISLLYVNNNFDINFKSQLINNSNNHTNQSNNLPLYQWDDKEYFKLNPSLEKIKNEGPSIHSLGNNTDSPYPSYQTFIDIKKSPFQWLKGHQVSDKFYYPGMGYVHNLLSIYPNQDITISSLEFKSPLVLTEGNRQCLQTTIAPLSKNEFNIKSHYKDQKTNQWILSSLGNFSLFKHNIENNESINIQSLKDKCNFTTISKQDFYETIRIKTNLTYKGLFQGVKECYIGNNCSLVKVSLNEIYNQKEYNHLINNSNMNTFFNTAILDTCLHGVLVAVTQPIVLDRIEAFKFYSSNITSSNISNNDTIKELYVYSETRARTNSQTYSGSIKIILPNGTLLVDIGNVVCTIVGSNPDSTIICKPPSNEIYTPYLQSKDSIINKPEQFKHLYRVDEFSVKEEDNQLLSIELLLSLFYKHINNRCPSINLESLATLEYDQFKQLYYNSLVNENLFKFIFEILKKYQNLPKISNNNNNNNNNNNNNNNNNNNNKNNGYNNYENLYIRTTKVMAKQLFPLKDDDSITDTPQSLFEIGYLNEFYKNSNVIQPSNNLLSEIIVETLKPILNEPIVFRILEAGGGTGSLSLLILEKICKLLNDNSTTSIINIEFTWSDISASFFAEIKEKFSSFTNHNNLNIIYRVLDLEKPLLDQDLKASYYDFVVMSNVMHVVKKLKPTLNEIHNILTPNGQLLYIEPPYKSFYYDSIFGCFSQWWPSSDSDIELRPDRCCMKQEKWINLLNQCNYKDTIMSGNDNLAFLIQTRKPTINEIISEESKSLDQLNSFSNIILFSNNNNIRNNNNRNKNDSRSSIQNLISLNQELRHKIVNINNYNEFQSWITNNQNKDDCNKTLIIFLKSIESTMNTFNFKEITFEYIQINQLILKLELSNNFKHLLLSLNSSTDNYLSSSIIGSARYFHVEFPQLDLLTLNYDNVSIENNQQLSLINYLINSDNNIQIEFTINNNKVYYERYFKRSNNIKSKLQSESFETNKDNLYIQLNSNLEYQLYSKKDELNSNEVEIEIKATGINYKDYLMYIGMIGSDLDIKYGKEYEIENGIGIDNPNIGNDFSGIITRLGNNVKKFKVGDQVCGIGPKASSSHVIVDFNFIYYKPFNCNHSVSASIPSIYITSLHSIYSIGNLKSNESILIHSAAGGIGISSLDLLKSKQHQGYIFLTVGSKDKEEYLTKKYGSLITAIYSSRNKNYVKDIKNKLIELGEVEQQGVDLILNTLSSEYMDSNFQCLNLSGRIIDLSITHLTPNDYMTNNHFKFNMTYSNVEVVDFTSKLIKSYLKKIIKMINSNKLELSVPIIEYSNNQFKDAIEYINQRKHIGKIIVNHNQDEFNRVYNNYQSNNNHIIMKHSYDISKLNIGKNILLTGQTGIVLEILKYLIKYSNHSIENIIILSKSKLKWELELLINQSKFKKDNIIKFHFNQIDIEDSNKVNQVLNQLELNENITNIDSIIHFAFMNDISDIQQVDMNRLNNTHGAKTIGAINLHNQSINRSWNIKQFIMASSVVSIVGSDRQCCYVSACNVIDSLSKYRHSIGLPSLAINLGAISSTGFISRNNAIETMFKSSILNLFSPQLIISSLDLFIQNQHQYPNYCISDFNFEILPSTLTNQYLSKFDFEINIVKKSNQMKSFTGGNGDSNNEIIRSTILNKISELLSIDESKINEDLQLTQYGMDSLVIVQLKNFIDNQIGHNIITIQQLQNNKINQSIEIIKSAHNKNNNNNNINNNNNNNNNNNNNNNNNNNNNNNNNNNNNNNNNNLVKKEQQSLDEFIKNETKLNESIISRPYSIKNILNNNNNSKSIFLTGSTGFLGAYLLTELIKMNNVSKIYCLIRNNSKLTNPIDVIINNLKKHQLIDMNEESPKRKTKINDHTGNISNDKLYGNLNSDNSSNNQIKEDQLIKIIPMIGDISKDKFGLTEQDYLKLSNECDIIINSAADLNLKSSYEESKIVNINNVNQIIKLSISNNSSQKLIVHFSSLAVFINHPFEDGEDFEETNIVPSFNSTPVGYIQCKVISERLLTNAAESRGIPSIIIRPPVLTLYNIPITIFIAILIIDIFSNPITGIGHSNDFISLLIKSSKEIGYYPNIHKSVFTTPVTTIAKTTIDLIFNENSWNQNKSKPISIYNFNGDSIEMKSFYRVLENSFKCKEIDFYEWIELVSKSNGKSSKRYSTFHIHKNQNLLITSSKINSLFKMSNSTKELLISIGSYNHQDWEINESIILNDIINNH.

In terms of domain architecture, Ketosynthase family 3 (KS3) spans 24 to 457 (SGDVAVVGIG…GSNVCLILSE (434 aa)). Active-site for beta-ketoacyl synthase activity residues include cysteine 196, histidine 335, and histidine 380. An acyl/malonyl transferase region spans residues 660 to 693 (GVSADIIIGHSLGEISSAYCSGMIDFQTLCYLTY). The For acyl/malonyl transferase activity role is filled by serine 670. The N-terminal hotdog fold stretch occupies residues 958–1080 (GPSIHSLGNN…GNFSLFKHNI (123 aa)). Positions 958 to 1257 (GPSIHSLGNN…CTIVGSNPDS (300 aa)) constitute a PKS/mFAS DH domain. The active-site Proton acceptor; for dehydratase activity is the histidine 992. Residues 1096–1257 (NFTTISKQDF…CTIVGSNPDS (162 aa)) are C-terminal hotdog fold. The active-site Proton donor; for dehydratase activity is the aspartate 1168. A disordered region spans residues 1369 to 1394 (SNNNNNNNNNNNNNNNNNNNNKNNGY). Over residues 1370–1394 (NNNNNNNNNNNNNNNNNNNNKNNGY) the composition is skewed to low complexity. One can recognise a Carrier domain in the interval 2539 to 2616 (SNNEIIRSTI…QSIEIIKSAH (78 aa)). Serine 2576 is subject to O-(pantetheine 4'-phosphoryl)serine. A disordered region spans residues 2617 to 2659 (NKNNNNNNINNNNNNNNNNNNNNNNNNNNNNNNNNNNNNNNNN). Positions 2617–2671 (NKNNNNNNINNNNNNNNNNNNNNNNNNNNNNNNNNNNNNNNNNLVKKEQQSLDEF) form a coiled coil. A helical transmembrane segment spans residues 2937 to 2957 (VLTLYNIPITIFIAILIIDIF).

Pantetheine 4'-phosphate is required as a cofactor.

The protein localises to the membrane. Probable polyketide synthase. The chain is Probable polyketide synthase 33 (pks33) from Dictyostelium discoideum (Social amoeba).